The chain runs to 178 residues: ATP synthase subunit delta (178 aa).

The protein belongs to the ATPase delta chain family. In terms of assembly, F-type ATPases have 2 components, F(1) - the catalytic core - and F(0) - the membrane proton channel. F(1) has five subunits: alpha(3), beta(3), gamma(1), delta(1), epsilon(1). F(0) has three main subunits: a(1), b(2) and c(10-14). The alpha and beta chains form an alternating ring which encloses part of the gamma chain. F(1) is attached to F(0) by a central stalk formed by the gamma and epsilon chains, while a peripheral stalk is formed by the delta and b chains.

It localises to the cell membrane. Its function is as follows. F(1)F(0) ATP synthase produces ATP from ADP in the presence of a proton or sodium gradient. F-type ATPases consist of two structural domains, F(1) containing the extramembraneous catalytic core and F(0) containing the membrane proton channel, linked together by a central stalk and a peripheral stalk. During catalysis, ATP synthesis in the catalytic domain of F(1) is coupled via a rotary mechanism of the central stalk subunits to proton translocation. This protein is part of the stalk that links CF(0) to CF(1). It either transmits conformational changes from CF(0) to CF(1) or is implicated in proton conduction. This chain is ATP synthase subunit delta, found in Streptococcus pyogenes serotype M3 (strain ATCC BAA-595 / MGAS315).